A 299-amino-acid chain; its full sequence is N-acetylmuramic acid 6-phosphate etherase (299 aa).

Residues Ile57–Lys220 form the SIS domain. Glu85 serves as the catalytic Proton donor. The active site involves Glu116.

Belongs to the GCKR-like family. MurNAc-6-P etherase subfamily. Homodimer.

It carries out the reaction N-acetyl-D-muramate 6-phosphate + H2O = N-acetyl-D-glucosamine 6-phosphate + (R)-lactate. Its pathway is amino-sugar metabolism; 1,6-anhydro-N-acetylmuramate degradation. The protein operates within amino-sugar metabolism; N-acetylmuramate degradation. It functions in the pathway cell wall biogenesis; peptidoglycan recycling. Its function is as follows. Specifically catalyzes the cleavage of the D-lactyl ether substituent of MurNAc 6-phosphate, producing GlcNAc 6-phosphate and D-lactate. Together with AnmK, is also required for the utilization of anhydro-N-acetylmuramic acid (anhMurNAc) either imported from the medium or derived from its own cell wall murein, and thus plays a role in cell wall recycling. The protein is N-acetylmuramic acid 6-phosphate etherase of Psychromonas ingrahamii (strain DSM 17664 / CCUG 51855 / 37).